The chain runs to 205 residues: MVGIVNYNIGNLASVLNALVKVGAKAQIEKEPSRLLEYDRLILPGVGAFGDAMEHLVQSGMKEAVLEFAKSGKPLLGICLGMQLLFEKSYEFGEHAGLGLLEGEIIPFDKTRMGEGYKIPQMGWNRFYAKKKSPLLKGLEEGFYLYYVHSFHAVAKREEDVLGESVYGYPFVSAIERDNVAGFQPHPEKSHDVGLRILKNFCEIG.

Residues 1-205 (MVGIVNYNIG…RILKNFCEIG (205 aa)) enclose the Glutamine amidotransferase type-1 domain. Catalysis depends on Cys-79, which acts as the Nucleophile. Residues His-186 and Glu-188 contribute to the active site.

In terms of assembly, heterodimer of HisH and HisF.

The protein localises to the cytoplasm. It carries out the reaction 5-[(5-phospho-1-deoxy-D-ribulos-1-ylimino)methylamino]-1-(5-phospho-beta-D-ribosyl)imidazole-4-carboxamide + L-glutamine = D-erythro-1-(imidazol-4-yl)glycerol 3-phosphate + 5-amino-1-(5-phospho-beta-D-ribosyl)imidazole-4-carboxamide + L-glutamate + H(+). It catalyses the reaction L-glutamine + H2O = L-glutamate + NH4(+). It participates in amino-acid biosynthesis; L-histidine biosynthesis; L-histidine from 5-phospho-alpha-D-ribose 1-diphosphate: step 5/9. In terms of biological role, IGPS catalyzes the conversion of PRFAR and glutamine to IGP, AICAR and glutamate. The HisH subunit catalyzes the hydrolysis of glutamine to glutamate and ammonia as part of the synthesis of IGP and AICAR. The resulting ammonia molecule is channeled to the active site of HisF. The polypeptide is Imidazole glycerol phosphate synthase subunit HisH (Wolinella succinogenes (strain ATCC 29543 / DSM 1740 / CCUG 13145 / JCM 31913 / LMG 7466 / NCTC 11488 / FDC 602W) (Vibrio succinogenes)).